The following is a 344-amino-acid chain: Nuclear distribution protein nudE homolog 1 (344 aa).

The segment at Met1–Ile93 is self-association. The stretch at Trp18–Lys188 forms a coiled coil. Basic and acidic residues predominate over residues Glu30–Glu47. Residues Glu30 to Leu65 form a disordered region. Residues Glu88–Leu156 are interaction with PAFAH1B1. Positions Gln167–Ala290 are interaction with CENPF. The interval Ala181–Thr243 is disordered. Residues Ala208–Glu230 are compositionally biased toward polar residues. Position 211 is a phosphoserine (Ser211). Phosphothreonine is present on residues Thr215, Thr228, Thr243, and Thr246. Residue Cys274 is the site of S-palmitoyl cysteine; by ZDHHC2, ZDHHC3 and ZDHHC7 attachment. Residues Tyr279–Gln337 form a disordered region. Ser282 is modified (phosphoserine). Residues Lys296–Pro305 show a composition bias toward basic and acidic residues. Low complexity predominate over residues Pro324–Ser335.

It belongs to the nudE family. As to quaternary structure, homodimer. Interacts with CNTRL, LIS1, dynein, SLMAP and TCP1. Interacts with CENPF, dynactin, tubulin gamma, PAFAH1B1, PCM1 and PCNT. Interacts with ZNF365. Interacts with GTP-bound RAB9A and RAB9B; the interaction leads to RAB9-dynein motor tethering. Interacts (via C-terminus) with MCRS1 (via C-terminus); phosphorylation of NDE1 inhibits the interaction. In terms of processing, phosphorylated in mitosis. Phosphorylation at Thr-246 is essential for the G2/M transition. As to expression, expressed in brain, heart, kidney, liver, lung, skeletal muscle, spleen and testis.

It localises to the cytoplasm. The protein localises to the cytoskeleton. The protein resides in the microtubule organizing center. It is found in the centrosome. Its subcellular location is the spindle. It localises to the chromosome. The protein localises to the centromere. The protein resides in the kinetochore. It is found in the cleavage furrow. Its subcellular location is the cytoplasmic vesicle membrane. Required for centrosome duplication and formation and function of the mitotic spindle. Essential for the development of the cerebral cortex. May regulate the production of neurons by controlling the orientation of the mitotic spindle during division of cortical neuronal progenitors of the proliferative ventricular zone of the brain. Orientation of the division plane perpendicular to the layers of the cortex gives rise to two proliferative neuronal progenitors whereas parallel orientation of the division plane yields one proliferative neuronal progenitor and a postmitotic neuron. A premature shift towards a neuronal fate within the progenitor population may result in an overall reduction in the final number of neurons and an increase in the number of neurons in the deeper layers of the cortex. Acts as a RAB9A/B effector that tethers RAB9-associated late endosomes to the dynein motor for their retrograde transport to the trans-Golgi network. The polypeptide is Nuclear distribution protein nudE homolog 1 (Rattus norvegicus (Rat)).